The following is a 164-amino-acid chain: Class I hydrophobin rodA (164 aa).

The N-terminal stretch at Met1 to Ala18 is a signal peptide. The N-linked (GlcNAc...) asparagine glycan is linked to Asn50. 4 disulfides stabilise this stretch: Cys60-Cys138, Cys68-Cys132, Cys69-Cys109, and Cys139-Cys157.

The protein belongs to the fungal hydrophobin family. As to quaternary structure, self-assembles to form functional amyloid fibrils called rodlets. Self-assembly into fibrillar rodlets occurs spontaneously at hydrophobic:hydrophilic interfaces and the rodlets further associate laterally to form amphipathic monolayers.

Its subcellular location is the secreted. The protein localises to the cell wall. Aerial growth, conidiation, and dispersal of filamentous fungi in the environment rely upon a capability of their secreting small amphipathic proteins called hydrophobins (HPBs) with low sequence identity. Class I can self-assemble into an outermost layer of rodlet bundles on aerial cell surfaces, conferring cellular hydrophobicity that supports fungal growth, development and dispersal; whereas Class II form highly ordered films at water-air interfaces through intermolecular interactions but contribute nothing to the rodlet structure. RodA is a class I hydrophobin involved in the cell surface hydrophobicity and conidiation under aerial conditions. The surface rodlet layer of the conidial cell wall makes airborne conidia of filamentous fungi inert to both innate and adaptive immunity. The sequence is that of Class I hydrophobin rodA from Penicillium camembertii.